Here is a 105-residue protein sequence, read N- to C-terminus: Large ribosomal subunit protein eL42 (105 aa).

The segment at 28 to 57 is disordered; that stretch reads YKKGKDSLAAQGKRRYDRKQSGYGGQTKPV.

The protein belongs to the eukaryotic ribosomal protein eL42 family.

This chain is Large ribosomal subunit protein eL42 (RPL44), found in Gossypium hirsutum (Upland cotton).